Here is a 383-residue protein sequence, read N- to C-terminus: uncharacterized protein (383 aa).

Disordered stretches follow at residues 27–66 and 242–281; these read ENNN…NKKP and LITT…ITRR. 2 stretches are compositionally biased toward low complexity: residues 28 to 63 and 242 to 275; these read NNNT…NNNN and LITT…KSSS.

This is an uncharacterized protein from Dictyostelium discoideum (Social amoeba).